A 431-amino-acid polypeptide reads, in one-letter code: Glutamyl-tRNA reductase (431 aa).

Substrate-binding positions include 49 to 52, S109, 114 to 116, and Q120; these read TCNR and EGQ. C50 serves as the catalytic Nucleophile. Position 189 to 194 (189 to 194) interacts with NADP(+); sequence GAGKMA.

The protein belongs to the glutamyl-tRNA reductase family. In terms of assembly, homodimer.

It catalyses the reaction (S)-4-amino-5-oxopentanoate + tRNA(Glu) + NADP(+) = L-glutamyl-tRNA(Glu) + NADPH + H(+). The protein operates within porphyrin-containing compound metabolism; protoporphyrin-IX biosynthesis; 5-aminolevulinate from L-glutamyl-tRNA(Glu): step 1/2. It participates in porphyrin-containing compound metabolism; chlorophyll biosynthesis. Functionally, catalyzes the NADPH-dependent reduction of glutamyl-tRNA(Glu) to glutamate 1-semialdehyde (GSA). This is Glutamyl-tRNA reductase from Synechococcus sp. (strain JA-3-3Ab) (Cyanobacteria bacterium Yellowstone A-Prime).